The chain runs to 354 residues: D-alanine--D-alanine ligase (354 aa).

Residues 140–344 (KRLLRDSGLS…ISTLLTRLIM (205 aa)) form the ATP-grasp domain. 170–225 (ADMFGLPFFVKPVNQGSSIGVAKVNDDYSFHSALDIAFFYSHKIIIESCIAGRELE) contributes to the ATP binding site. The Mg(2+) site is built by D298, E311, and N313.

Belongs to the D-alanine--D-alanine ligase family. Requires Mg(2+) as cofactor. It depends on Mn(2+) as a cofactor.

Its subcellular location is the cytoplasm. The enzyme catalyses 2 D-alanine + ATP = D-alanyl-D-alanine + ADP + phosphate + H(+). It participates in cell wall biogenesis; peptidoglycan biosynthesis. Cell wall formation. In Blochmanniella floridana, this protein is D-alanine--D-alanine ligase.